Consider the following 267-residue polypeptide: 2-keto-3-deoxy-L-rhamnonate aldolase (267 aa).

H49 functions as the Proton acceptor in the catalytic mechanism. Q151 provides a ligand contact to substrate. Residue E153 participates in Mg(2+) binding. The substrate site is built by A178 and D179. D179 provides a ligand contact to Mg(2+).

Belongs to the HpcH/HpaI aldolase family. KDR aldolase subfamily. Homohexamer. The cofactor is Mg(2+).

The enzyme catalyses 2-dehydro-3-deoxy-L-rhamnonate = (S)-lactaldehyde + pyruvate. Its function is as follows. Catalyzes the reversible retro-aldol cleavage of 2-keto-3-deoxy-L-rhamnonate (KDR) to pyruvate and lactaldehyde. This chain is 2-keto-3-deoxy-L-rhamnonate aldolase, found in Escherichia coli O157:H7.